A 263-amino-acid polypeptide reads, in one-letter code: Undecaprenyl-diphosphatase (263 aa).

The next 6 helical transmembrane spans lie at 40–60, 87–107, 109–129, 186–206, 219–239, and 243–263; these read PGVL…LVYF, LLII…DFFV, AFHN…LLFF, FSFL…LLEW, AGAV…MGVV, and RLYA…AISS.

The protein belongs to the UppP family.

It localises to the cell inner membrane. It carries out the reaction di-trans,octa-cis-undecaprenyl diphosphate + H2O = di-trans,octa-cis-undecaprenyl phosphate + phosphate + H(+). Catalyzes the dephosphorylation of undecaprenyl diphosphate (UPP). Confers resistance to bacitracin. The polypeptide is Undecaprenyl-diphosphatase (Syntrophotalea carbinolica (strain DSM 2380 / NBRC 103641 / GraBd1) (Pelobacter carbinolicus)).